Here is a 231-residue protein sequence, read N- to C-terminus: Orotidine 5'-phosphate decarboxylase (231 aa).

Residues aspartate 11, lysine 33, 60-69 (DLKFHDIPNT), threonine 117, arginine 178, glutamine 187, glycine 207, and arginine 208 contribute to the substrate site. The Proton donor role is filled by lysine 62.

It belongs to the OMP decarboxylase family. Type 1 subfamily. Homodimer.

It carries out the reaction orotidine 5'-phosphate + H(+) = UMP + CO2. Its pathway is pyrimidine metabolism; UMP biosynthesis via de novo pathway; UMP from orotate: step 2/2. Catalyzes the decarboxylation of orotidine 5'-monophosphate (OMP) to uridine 5'-monophosphate (UMP). The protein is Orotidine 5'-phosphate decarboxylase of Nitrosomonas europaea (strain ATCC 19718 / CIP 103999 / KCTC 2705 / NBRC 14298).